A 234-amino-acid chain; its full sequence is 2,3,4,5-tetrahydropyridine-2,6-dicarboxylate N-acetyltransferase (234 aa).

Belongs to the transferase hexapeptide repeat family. DapH subfamily.

The enzyme catalyses (S)-2,3,4,5-tetrahydrodipicolinate + acetyl-CoA + H2O = L-2-acetamido-6-oxoheptanedioate + CoA. The protein operates within amino-acid biosynthesis; L-lysine biosynthesis via DAP pathway; LL-2,6-diaminopimelate from (S)-tetrahydrodipicolinate (acetylase route): step 1/3. Its function is as follows. Catalyzes the transfer of an acetyl group from acetyl-CoA to tetrahydrodipicolinate. This chain is 2,3,4,5-tetrahydropyridine-2,6-dicarboxylate N-acetyltransferase, found in Lacticaseibacillus paracasei (strain ATCC 334 / BCRC 17002 / CCUG 31169 / CIP 107868 / KCTC 3260 / NRRL B-441) (Lactobacillus paracasei).